Consider the following 1131-residue polypeptide: Major DNA-binding protein (1131 aa).

The Required for filament formation motif lies at 790–791 (FW). The tract at residues 1112 to 1131 (LKCEETEHENEEPSLKKARL) is required for nuclear localization.

The protein belongs to the herpesviridae major DNA-binding protein family. As to quaternary structure, homooligomers. Forms double-helical filaments necessary for the formation of replication compartments within the host nucleus. Interacts with the origin-binding protein. Interacts with the helicase primase complex; this interaction stimulates primer synthesis activity of the helicase-primase complex. Interacts with the DNA polymerase. Interacts with the alkaline exonuclease; this interaction increases its nuclease processivity.

The protein localises to the host nucleus. Single-stranded DNA-binding protein required for DNA replication. In terms of biological role, plays several crucial roles in viral infection. Participates in the opening of the viral DNA origin to initiate replication by interacting with the origin-binding protein. May disrupt loops, hairpins and other secondary structures present on ssDNA to reduce and eliminate pausing of viral DNA polymerase at specific sites during elongation. Promotes viral DNA recombination by performing strand-transfer, characterized by the ability to transfer a DNA strand from a linear duplex to a complementary single-stranded DNA circle. Can also catalyze the renaturation of complementary single strands. Additionally, reorganizes the host cell nucleus, leading to the formation of prereplicative sites and replication compartments. This process is driven by the protein which can form double-helical filaments in the absence of DNA. This is Major DNA-binding protein from Human herpesvirus 7 (strain JI) (HHV-7).